The chain runs to 709 residues: Polyribonucleotide nucleotidyltransferase (709 aa).

Positions 485 and 491 each coordinate Mg(2+). The KH domain occupies 552-611 (PRIYTMKIDPKKIKDVIGKGGATIRSLTEETGTSIDIDDDGTVKIAAVDSNAAKNVMGRI). An S1 motif domain is found at 621–689 (GAIYKGKVTR…RQGRIRLTMK (69 aa)).

Belongs to the polyribonucleotide nucleotidyltransferase family. As to quaternary structure, component of the RNA degradosome, which is a multiprotein complex involved in RNA processing and mRNA degradation. Mg(2+) is required as a cofactor.

Its subcellular location is the cytoplasm. The catalysed reaction is RNA(n+1) + phosphate = RNA(n) + a ribonucleoside 5'-diphosphate. Involved in mRNA degradation. Catalyzes the phosphorolysis of single-stranded polyribonucleotides processively in the 3'- to 5'-direction. This chain is Polyribonucleotide nucleotidyltransferase, found in Haemophilus influenzae (strain PittEE).